We begin with the raw amino-acid sequence, 581 residues long: MDQSTTQIYKRLISYVGAYRTVAIVAIIGMIGYSGMDALFIQLMKPFIDEGLNERNADVLKYAPFVVIALVIGRGVFNFMSSYCLSYVGSQVVRSLRQELFEHILHLPVSFHDKNSTGDLISKITFDTEQVQQAITKALLIVVREGAFVVFLLAVMFYTSWQLSLIFLVIIPLVAVIVTVVSKRFRHISKSIQSAMGQVTRSSEQMLSGHKVIHGFGGQNQEIDQFSKVNNHNRQQRIKMDATKALSVSIIQVLAASAMAVILWVVSMPSMIDTISSGDFVVLISSMMMLLRPLKQLANVNSDMQRGVSAAQSVFLILDEEVEKDTGTVSVDKVKGLIEVKNVTFKYPTKDEPVLNNLSLTIKAGESIALVGRSGSGKSTISNLLPRYYDLEAPSEILLDGIALHDYKLTDLRRQFALVSQQVVLFNDSIANNICYGLQREISQQELEKVAKQAHVWEFVKDLPEQLNTMVGENGVMLSGGQRQRIAIARAILKDAPILILDEATSALDTESEKLIQQALEALMKDKTSIVIAHRLSTIENSDRIYVIDNGSVIESGDHLSLLANNGTYSALCKMQFGEQG.

The next 6 helical transmembrane spans lie at 21–41 (TVAI…ALFI), 65–85 (FVVI…SYCL), 138–158 (ALLI…VMFY), 161–181 (WQLS…VTVV), 246–266 (LSVS…LWVV), and 271–291 (MIDT…MMLL). Residues 24-306 (IVAIIGMIGY…LANVNSDMQR (283 aa)) enclose the ABC transmembrane type-1 domain. Residues 338 to 575 (IEVKNVTFKY…NGTYSALCKM (238 aa)) enclose the ABC transporter domain. 372 to 379 (GRSGSGKS) serves as a coordination point for ATP.

This sequence belongs to the ABC transporter superfamily. Lipid exporter (TC 3.A.1.106) family. Homodimer.

The protein resides in the cell inner membrane. The catalysed reaction is ATP + H2O + lipid A-core oligosaccharideSide 1 = ADP + phosphate + lipid A-core oligosaccharideSide 2.. Functionally, involved in lipopolysaccharide (LPS) biosynthesis. Translocates lipid A-core from the inner to the outer leaflet of the inner membrane. Transmembrane domains (TMD) form a pore in the inner membrane and the ATP-binding domain (NBD) is responsible for energy generation. This Pseudoalteromonas translucida (strain TAC 125) protein is ATP-dependent lipid A-core flippase.